The chain runs to 196 residues: Ribonuclease HII (196 aa).

Positions 15-196 constitute an RNase H type-2 domain; it reads FILAGIDEAG…RLSFTKALYK (182 aa). Positions 21, 22, and 112 each coordinate a divalent metal cation.

It belongs to the RNase HII family. Requires Mn(2+) as cofactor. The cofactor is Mg(2+).

The protein resides in the cytoplasm. The enzyme catalyses Endonucleolytic cleavage to 5'-phosphomonoester.. Endonuclease that specifically degrades the RNA of RNA-DNA hybrids. This is Ribonuclease HII from Rickettsia bellii (strain OSU 85-389).